The following is a 472-amino-acid chain: Mitochondrial substrate carrier family protein C (472 aa).

Topologically, residues 1–189 (MVLNENDKEF…ASSLRNTITY (189 aa)) are mitochondrial intermembrane. 4 consecutive EF-hand domains span residues 6–41 (NDKE…LRIP), 42–70 (SSEK…FEDF), 73–108 (ENIK…LNIP), and 110–145 (YSEQ…LPNS). Residues Asp-19, Asp-21, Asn-23, Lys-25, Glu-30, Asp-55, Asp-57, Asp-59, Ser-61, Glu-66, Asp-86, Asn-88, Ser-90, Thr-92, Glu-97, Asp-123, Asn-125, Asp-127, Gln-129, and Glu-134 each coordinate Ca(2+). Solcar repeat units follow at residues 184–268 (RNTI…VKKL), 276–362 (LTSA…LKHK), and 375–461 (GQLL…FKKA). A helical membrane pass occupies residues 190-207 (MLAGSVAGFASRTSTAPL). Over 208 to 242 (ERVKIMCQLNHGKPISLISAFKACYKDGGIKGFFR) the chain is Mitochondrial matrix. Residues 243–263 (GNLANIIKVSPESAVKFGTYE) form a helical membrane-spanning segment. The Mitochondrial intermembrane segment spans residues 264–281 (YVKKLFAENDCELTSAQR). The chain crosses the membrane as a helical span at residues 282–302 (FISGSVAGVVSHTTLFPLEVV). At 303–330 (RLRLSAEIAGTYNGIFDCFKKIAISEKS) the chain is on the mitochondrial matrix side. The chain crosses the membrane as a helical span at residues 331 to 351 (IRPFYRGLGASITATIPHSGV). Over 352–377 (NMMVYEFLKHKVIKMTGNEFPTAGQL) the chain is Mitochondrial intermembrane. The chain crosses the membrane as a helical span at residues 378–398 (LVCASTSSVCGQLVGYPFHVV). At 399-441 (KSRLITQGSSVNQEKYTGLFDGLTKIIKKEGPIGLYKGIVPSF) the chain is on the mitochondrial matrix side. The helical transmembrane segment at 442 to 462 (MKSIPSHSITFIVYEGFKKAF) threads the bilayer. Over 463–472 (DVNLKEKKHH) the chain is Mitochondrial intermembrane.

It belongs to the mitochondrial carrier (TC 2.A.29) family.

It localises to the mitochondrion inner membrane. Functionally, calcium-dependent mitochondrial solute carrier. Mitochondrial solute carriers shuttle metabolites, nucleotides, and cofactors through the mitochondrial inner membrane. The sequence is that of Mitochondrial substrate carrier family protein C (mcfC) from Dictyostelium discoideum (Social amoeba).